Consider the following 345-residue polypeptide: Fructose-1,6-bisphosphatase class 1 2 (345 aa).

The Mg(2+) site is built by E90, D109, L111, and D112. Substrate-binding positions include D112–S115 and N200. E272 serves as a coordination point for Mg(2+).

This sequence belongs to the FBPase class 1 family. In terms of assembly, homotetramer. Requires Mg(2+) as cofactor.

Its subcellular location is the cytoplasm. It carries out the reaction beta-D-fructose 1,6-bisphosphate + H2O = beta-D-fructose 6-phosphate + phosphate. Its pathway is carbohydrate biosynthesis; gluconeogenesis. The sequence is that of Fructose-1,6-bisphosphatase class 1 2 from Nitrobacter hamburgensis (strain DSM 10229 / NCIMB 13809 / X14).